A 523-amino-acid polypeptide reads, in one-letter code: Sugar carrier protein C (523 aa).

The Cytoplasmic portion of the chain corresponds to 1 to 25; sequence MPAVGGIPPSGGNRKVYPGNLTLYV. 12 consecutive transmembrane segments (helical) span residues 26–46, 86–106, 120–140, 143–163, 172–192, 205–225, 298–320, 327–347, 351–371, 387–407, 433–453, and 456–476; these read TVTC…IGIS, MFTS…STIT, VLFC…MLIL, ILLG…LSEM, LNIG…VLNY, LSLG…LVLP, LTGI…FGSD, VITG…VDKW, FLFL…AACI, WYAV…AWSW, SVNM…LCHL, and GLFI…YYFL. At 477–523 the chain is on the cytoplasmic side; sequence PETKGIPIEEMGQVWKQHWYWSRYVVDEDYPNGGLEMGKEGRIPKNV.

The protein belongs to the major facilitator superfamily. Sugar transporter (TC 2.A.1.1) family.

The protein resides in the membrane. The sequence is that of Sugar carrier protein C (STC) from Ricinus communis (Castor bean).